Consider the following 449-residue polypeptide: Putative transporter C83.11 (449 aa).

A run of 9 helical transmembrane segments spans residues 7-27 (LSHI…LWYI), 47-67 (VTLT…CLLF), 84-104 (VLYT…FGSL), 109-129 (IPVS…VLAY), 136-156 (VYSA…TLAC), 164-184 (IVGL…NIFG), 205-225 (LNLL…VWLY), 255-275 (ILAF…ASLI), and 278-298 (IFVI…TQGS). Ser348 and Ser352 each carry phosphoserine. Residue Tyr355 is modified to Phosphotyrosine. The segment covering 382-415 (NSVYSNEGVTSSVSGNATPASVRQSTQNDFSNSN) has biased composition (polar residues). The segment at 382–416 (NSVYSNEGVTSSVSGNATPASVRQSTQNDFSNSNI) is disordered.

The protein belongs to the TPT transporter family.

Its subcellular location is the membrane. In Schizosaccharomyces pombe (strain 972 / ATCC 24843) (Fission yeast), this protein is Putative transporter C83.11.